The primary structure comprises 192 residues: Mitochondrial import inner membrane translocase subunit Tim22 (192 aa).

2 disulfides stabilise this stretch: Cys-67/Cys-139 and Cys-158/Cys-177. The next 3 helical transmembrane spans lie at 72–92, 123–141, and 168–188; these read VLAC…TAGI, YAKN…ECLV, and AGVK…AAID.

It belongs to the Tim17/Tim22/Tim23 family. In terms of assembly, component of the TIM22 complex, whose core is composed of TIMM22, associated with peripheral protein FXC1/TIMM10B and the 70 kDa heterohexamer. In most cases, the 70 kDa complex is composed of TIMM9 and TIMM10 (TIMM10A or TIMM10B). A small fraction of the 70 kDa complex is composed of TIMM8 (TIMM8A/DDP1 or TIMM8B/DDP2) and TIMM13. The TIM22 complex also contains AGK and TIMM29. Interacts directly with TIMM9, TIMM10A and FXC1/TIMM10B. Interacts (when oxidized) with TIMM29; interaction is direct. Disulfide bonds promote efficient assembly of the TIM22 complex.

The protein resides in the mitochondrion inner membrane. Functionally, essential core component of the TIM22 complex, a complex that mediates the import and insertion of multi-pass transmembrane proteins into the mitochondrial inner membrane. In the TIM22 complex, it constitutes the voltage-activated and signal-gated channel. Forms a twin-pore translocase that uses the membrane potential as external driving force in 2 voltage-dependent steps. The polypeptide is Mitochondrial import inner membrane translocase subunit Tim22 (Timm22) (Rattus norvegicus (Rat)).